We begin with the raw amino-acid sequence, 294 residues long: Elongation factor Ts (294 aa).

An involved in Mg(2+) ion dislocation from EF-Tu region spans residues 81-84 (TDFV).

Belongs to the EF-Ts family.

The protein resides in the cytoplasm. Functionally, associates with the EF-Tu.GDP complex and induces the exchange of GDP to GTP. It remains bound to the aminoacyl-tRNA.EF-Tu.GTP complex up to the GTP hydrolysis stage on the ribosome. This Mycoplasmopsis pulmonis (strain UAB CTIP) (Mycoplasma pulmonis) protein is Elongation factor Ts (tsf).